The primary structure comprises 195 residues: Large ribosomal subunit protein bL17 (195 aa).

The segment at 125–195 is disordered; sequence ANRARRVGAS…PTQDSDADKS (71 aa). A compositionally biased stretch (low complexity) spans 136-152; that stretch reads QTAPVAAAAAPQAAVEP. Composition is skewed to acidic residues over residues 153–173 and 183–195; these read EATEGPDADDSSALPEAEDTT and TDDPTQDSDADKS.

This sequence belongs to the bacterial ribosomal protein bL17 family. As to quaternary structure, part of the 50S ribosomal subunit. Contacts protein L32.

This chain is Large ribosomal subunit protein bL17, found in Mycobacterium sp. (strain JLS).